A 90-amino-acid polypeptide reads, in one-letter code: Probable Fe(2+)-trafficking protein (90 aa).

It belongs to the Fe(2+)-trafficking protein family.

Functionally, could be a mediator in iron transactions between iron acquisition and iron-requiring processes, such as synthesis and/or repair of Fe-S clusters in biosynthetic enzymes. In Pseudoalteromonas atlantica (strain T6c / ATCC BAA-1087), this protein is Probable Fe(2+)-trafficking protein.